A 401-amino-acid polypeptide reads, in one-letter code: MSKLVLILNCGSSSLKFAILDPATGEEKLSGLAEAFFLPEARIKWKLNGEKGNADLGAGAAHTEALNFIASNILTDELKNSIAAIGHRIVHGGEKYTQSVIVTDEVVKGIEDAAQFAPLHNPAHLIGIREAFNAFPHLKDKNVVVFDTAFHQTMSEEAFLYALPYSLYKEHGVRRYGAHGTSHYFISREVAEYVGKPADQVNAIICHLGNGGSVSVVRNGQCIDTSMGLTPLEGLVMGTRCGDIDPAIVFYLYKTLGMSMEQIEETLVKKSGLLGLTEVTSDCRYAEDNYDNASKPEAKRALNVYSYRLAKYIGAYMAVLGDDHLDAIAFTGGIGENSAHVRELALNHLKLFGIKIDNERNLAARFGKDGVITTDDSAFKAIVLPTNEELVIAQDTARLCF.

N9 provides a ligand contact to Mg(2+). K16 contacts ATP. Substrate is bound at residue R88. The active-site Proton donor/acceptor is the D147. ATP contacts are provided by residues 207–211, 282–284, and 333–337; these read HLGNG, DCR, and GIGEN. E388 contributes to the Mg(2+) binding site.

The protein belongs to the acetokinase family. As to quaternary structure, homodimer. Mg(2+) serves as cofactor. Requires Mn(2+) as cofactor.

The protein resides in the cytoplasm. It catalyses the reaction acetate + ATP = acetyl phosphate + ADP. The protein operates within metabolic intermediate biosynthesis; acetyl-CoA biosynthesis; acetyl-CoA from acetate: step 1/2. Catalyzes the formation of acetyl phosphate from acetate and ATP. Can also catalyze the reverse reaction. The sequence is that of Acetate kinase from Haemophilus influenzae (strain 86-028NP).